The sequence spans 31 residues: Photosystem II reaction center protein T (31 aa).

A helical membrane pass occupies residues 3-23 (SFAYILILTLAIATLFFAIAF).

Belongs to the PsbT family. As to quaternary structure, PSII is composed of 1 copy each of membrane proteins PsbA, PsbB, PsbC, PsbD, PsbE, PsbF, PsbH, PsbI, PsbJ, PsbK, PsbL, PsbM, PsbT, PsbX, PsbY, PsbZ, Psb30/Ycf12, peripheral proteins PsbO, CyanoQ (PsbQ), PsbU, PsbV and a large number of cofactors. It forms dimeric complexes.

It localises to the cellular thylakoid membrane. Found at the monomer-monomer interface of the photosystem II (PS II) dimer, plays a role in assembly and dimerization of PSII. PSII is a light-driven water plastoquinone oxidoreductase, using light energy to abstract electrons from H(2)O, generating a proton gradient subsequently used for ATP formation. This Synechococcus sp. (strain WH7803) protein is Photosystem II reaction center protein T.